Here is a 171-residue protein sequence, read N- to C-terminus: ATP synthase subunit b (171 aa).

Residues 26 to 48 traverse the membrane as a helical segment; sequence LINLAIIIGLLVYAGRGFLGNLL.

Belongs to the ATPase B chain family. In terms of assembly, F-type ATPases have 2 components, F(1) - the catalytic core - and F(0) - the membrane proton channel. F(1) has five subunits: alpha(3), beta(3), gamma(1), delta(1), epsilon(1). F(0) has four main subunits: a(1), b(1), b'(1) and c(10-14). The alpha and beta chains form an alternating ring which encloses part of the gamma chain. F(1) is attached to F(0) by a central stalk formed by the gamma and epsilon chains, while a peripheral stalk is formed by the delta, b and b' chains.

The protein localises to the cellular thylakoid membrane. F(1)F(0) ATP synthase produces ATP from ADP in the presence of a proton or sodium gradient. F-type ATPases consist of two structural domains, F(1) containing the extramembraneous catalytic core and F(0) containing the membrane proton channel, linked together by a central stalk and a peripheral stalk. During catalysis, ATP synthesis in the catalytic domain of F(1) is coupled via a rotary mechanism of the central stalk subunits to proton translocation. Its function is as follows. Component of the F(0) channel, it forms part of the peripheral stalk, linking F(1) to F(0). This chain is ATP synthase subunit b, found in Synechococcus elongatus (strain ATCC 33912 / PCC 7942 / FACHB-805) (Anacystis nidulans R2).